A 1370-amino-acid chain; its full sequence is DNA polymerase II large subunit (1370 aa).

Disordered stretches follow at residues 279–317 (IGADDADEDTPDAGSDSDATDEGDAPSASTDAEEPPRAA) and 1041–1081 (AGDA…DGGS).

This sequence belongs to the archaeal DNA polymerase II family. Heterodimer of a large subunit and a small subunit. In terms of processing, this protein undergoes a protein self splicing that involves a post-translational excision of the intervening region (intein) followed by peptide ligation.

The enzyme catalyses DNA(n) + a 2'-deoxyribonucleoside 5'-triphosphate = DNA(n+1) + diphosphate. It carries out the reaction Exonucleolytic cleavage in the 3'- to 5'-direction to yield nucleoside 5'-phosphates.. In terms of biological role, possesses two activities: a DNA synthesis (polymerase) and an exonucleolytic activity that degrades single-stranded DNA in the 3'- to 5'-direction. Has a template-primer preference which is characteristic of a replicative DNA polymerase. The sequence is that of DNA polymerase II large subunit (polC) from Halobacterium salinarum (strain ATCC 700922 / JCM 11081 / NRC-1) (Halobacterium halobium).